Here is a 499-residue protein sequence, read N- to C-terminus: Glycerol kinase (499 aa).

Position 13 (threonine 13) interacts with ADP. Threonine 13, threonine 14, and serine 15 together coordinate ATP. A sn-glycerol 3-phosphate-binding site is contributed by threonine 13. Arginine 17 contacts ADP. Residues arginine 83, glutamate 84, tyrosine 135, and aspartate 245 each coordinate sn-glycerol 3-phosphate. The glycerol site is built by arginine 83, glutamate 84, tyrosine 135, aspartate 245, and glutamine 246. ADP-binding residues include threonine 267 and glycine 310. ATP is bound by residues threonine 267, glycine 310, glutamine 314, and glycine 411. The ADP site is built by glycine 411 and asparagine 415.

It belongs to the FGGY kinase family.

The enzyme catalyses glycerol + ATP = sn-glycerol 3-phosphate + ADP + H(+). Its pathway is polyol metabolism; glycerol degradation via glycerol kinase pathway; sn-glycerol 3-phosphate from glycerol: step 1/1. Its activity is regulated as follows. Inhibited by fructose 1,6-bisphosphate (FBP). Its function is as follows. Key enzyme in the regulation of glycerol uptake and metabolism. Catalyzes the phosphorylation of glycerol to yield sn-glycerol 3-phosphate. This is Glycerol kinase from Xanthomonas campestris pv. campestris (strain ATCC 33913 / DSM 3586 / NCPPB 528 / LMG 568 / P 25).